The primary structure comprises 322 residues: Short chain dehydrogenase AOL_s00215g274 (322 aa).

Residues 47 to 48 (AV), 104 to 106 (IAV), 197 to 201 (YNVSK), and 230 to 232 (VAT) contribute to the NAD(+) site. Tyr197 (proton acceptor) is an active-site residue.

This sequence belongs to the short-chain dehydrogenases/reductases (SDR) family.

Its pathway is secondary metabolite biosynthesis; terpenoid biosynthesis. Its function is as follows. Short chain dehydrogenase; part of the gene cluster that mediates the biosynthesis of sesquiterpenyl epoxy-cyclohexenoids (SECs) such as anthrobotrisins and arthrosporols, metabolites that possess a novel hybrid carbon skeleton consisting of a polyketide-derived epoxycyclohexenol combined with a terpenoid-derived monocyclic sesquiterpenol substructure (PKS-PTS hybrid). The SEC pathway plays an important role for fungal soil colonization via decreasing fungal nematode-capturing ability. Within the pathway, the cytochrome P450 monooxygenase AOL_s00215g274 is involved in specific regional ketone reductions at C-4 of farnesyl epoxy-quinone. The pathway begins with the biosynthesis of 6-methylsalicylic acid (6-MSA), the first precursor of the polyketide-derived epoxycyclohexenol in arthrosporols, by the polyketide synthase (PKS) AOL_s00215g283 via condensation of 1 acetate and 3 malonate units. The 6-methylsalicylic acid decarboxylase AOL_s00215g281 then catalyzes the decarboxylation of 6-methylsalicylic acid to yield m-cresol. The cytochrome P450 monooxygenase AOL_s00215g282 further oxidizes m-cresol to yield toluquinol. With the assistance of the oxidoreductase AOL_s00215g277, the polyprenyl transferase AOL_s00215g276 catalyzes the farnesylation of toluquinol to produce farnesyl hydroquinone, the hybrid precursor for biosynthesis of SECs. Farnesyl hydroquinone undergoes epoxidation and then subsequent dehydrogenation to form farnesyl epoxy-quinone, the first and simplest SEC. The cytochrome P450 monooxygenase AOL_s00215g278 and the FAD-dependent monooxygenase AOL_s00215g279 might be involved in the oxygenation of the phenol moiety, most likely in the epoxy formation. The cytochrome P450 monooxygenases AOL_s00215g274 and AOL_s00215g280 are involved in specific regional ketone reductions at respectively C-4 and C-1 of farnesyl epoxy-quinone PubMed:33823587. This chain is Short chain dehydrogenase AOL_s00215g274, found in Arthrobotrys oligospora (strain ATCC 24927 / CBS 115.81 / DSM 1491) (Nematode-trapping fungus).